Reading from the N-terminus, the 429-residue chain is Histidine--tRNA ligase (429 aa).

This sequence belongs to the class-II aminoacyl-tRNA synthetase family. In terms of assembly, homodimer.

Its subcellular location is the cytoplasm. It carries out the reaction tRNA(His) + L-histidine + ATP = L-histidyl-tRNA(His) + AMP + diphosphate + H(+). This is Histidine--tRNA ligase from Streptococcus pneumoniae (strain JJA).